A 391-amino-acid polypeptide reads, in one-letter code: uncharacterized protein (391 aa).

The protein belongs to the mycobacterial PPE family.

This is an uncharacterized protein from Mycobacterium tuberculosis (strain CDC 1551 / Oshkosh).